The chain runs to 201 residues: Protein LIGHT-DEPENDENT SHORT HYPOCOTYLS 2 (201 aa).

Over residues 1–14 the composition is skewed to polar residues; sequence MDLISQNHNNRNPN. Disordered regions lie at residues 1–37 and 151–201; these read MDLISQNHNNRNPNTSLSTQTPSSFSSPPSSSRYENQ and SRGV…GATQ. Low complexity predominate over residues 15–32; sequence TSLSTQTPSSFSSPPSSS. The region spanning 33–160 is the ALOG domain; the sequence is RYENQKRRDW…SRGVSYEKKR (128 aa). The Nuclear localization signal signature appears at 158-162; sequence KKRKR.

It belongs to the plant homeotic and developmental regulators ALOG protein family.

It is found in the nucleus. In terms of biological role, probable transcription regulator that acts as a developmental regulator by promoting cell growth in response to light. This Arabidopsis thaliana (Mouse-ear cress) protein is Protein LIGHT-DEPENDENT SHORT HYPOCOTYLS 2 (LSH2).